Reading from the N-terminus, the 777-residue chain is Aconitate hydratase, mitochondrial (777 aa).

Residues Gln-96 and 189-191 each bind substrate; that span reads DSH. Positions 383, 446, and 449 each coordinate [4Fe-4S] cluster. Substrate contacts are provided by residues Arg-472, Arg-477, Arg-605, and 668–669; that span reads SR.

Belongs to the aconitase/IPM isomerase family. In terms of assembly, monomer. The cofactor is [4Fe-4S] cluster.

The protein resides in the mitochondrion. The catalysed reaction is citrate = D-threo-isocitrate. It functions in the pathway carbohydrate metabolism; tricarboxylic acid cycle; isocitrate from oxaloacetate: step 2/2. Its function is as follows. Catalyzes the isomerization of citrate to isocitrate via cis-aconitate, a step in the citric acid cycle. The protein is Aconitate hydratase, mitochondrial (ACO1) of Candida albicans (strain SC5314 / ATCC MYA-2876) (Yeast).